The sequence spans 241 residues: 1-(5-phosphoribosyl)-5-[(5-phosphoribosylamino)methylideneamino] imidazole-4-carboxamide isomerase (241 aa).

Catalysis depends on aspartate 10, which acts as the Proton acceptor. Aspartate 131 acts as the Proton donor in catalysis.

The protein belongs to the HisA/HisF family.

It is found in the cytoplasm. The catalysed reaction is 1-(5-phospho-beta-D-ribosyl)-5-[(5-phospho-beta-D-ribosylamino)methylideneamino]imidazole-4-carboxamide = 5-[(5-phospho-1-deoxy-D-ribulos-1-ylimino)methylamino]-1-(5-phospho-beta-D-ribosyl)imidazole-4-carboxamide. Its pathway is amino-acid biosynthesis; L-histidine biosynthesis; L-histidine from 5-phospho-alpha-D-ribose 1-diphosphate: step 4/9. The chain is 1-(5-phosphoribosyl)-5-[(5-phosphoribosylamino)methylideneamino] imidazole-4-carboxamide isomerase from Bifidobacterium adolescentis (strain ATCC 15703 / DSM 20083 / NCTC 11814 / E194a).